A 36-amino-acid chain; its full sequence is Kappa-theraphotoxin-Aa1a (36 aa).

3 disulfides stabilise this stretch: C3–C18, C10–C23, and C17–C30. I36 is modified (isoleucine amide).

The protein belongs to the neurotoxin 10 (Hwtx-1) family. As to expression, expressed by the venom gland.

The protein resides in the secreted. In terms of biological role, selective inhibitor of voltage-gated potassium channel Kv10.1/KCNH1/EAG1 (IC(50)=637 nM). It acts by shifting the voltage dependence of channel activation in a depolarising direction. It shows a 100% inhibition at saturating concentrations, shows fast on-rates and is reversible. It also slightly affects channel inactivation, when the membrane is highly depolarised (&gt;+80 mV). This chain is Kappa-theraphotoxin-Aa1a, found in Avicularia aurantiaca (Yellow-banded pinktoe tarantula).